Consider the following 538-residue polypeptide: Bifunctional purine biosynthesis protein PurH (538 aa).

The region spanning 8-158 is the MGS-like domain; the sequence is IPAPDLVPVR…KNHAYVAIVT (151 aa).

This sequence belongs to the PurH family.

It carries out the reaction (6R)-10-formyltetrahydrofolate + 5-amino-1-(5-phospho-beta-D-ribosyl)imidazole-4-carboxamide = 5-formamido-1-(5-phospho-D-ribosyl)imidazole-4-carboxamide + (6S)-5,6,7,8-tetrahydrofolate. The enzyme catalyses IMP + H2O = 5-formamido-1-(5-phospho-D-ribosyl)imidazole-4-carboxamide. Its pathway is purine metabolism; IMP biosynthesis via de novo pathway; 5-formamido-1-(5-phospho-D-ribosyl)imidazole-4-carboxamide from 5-amino-1-(5-phospho-D-ribosyl)imidazole-4-carboxamide (10-formyl THF route): step 1/1. It participates in purine metabolism; IMP biosynthesis via de novo pathway; IMP from 5-formamido-1-(5-phospho-D-ribosyl)imidazole-4-carboxamide: step 1/1. This is Bifunctional purine biosynthesis protein PurH from Mesorhizobium japonicum (strain LMG 29417 / CECT 9101 / MAFF 303099) (Mesorhizobium loti (strain MAFF 303099)).